Reading from the N-terminus, the 320-residue chain is Aspartate carbamoyltransferase catalytic subunit (320 aa).

Residues arginine 68 and threonine 69 each contribute to the carbamoyl phosphate site. An L-aspartate-binding site is contributed by lysine 96. Positions 118, 148, and 151 each coordinate carbamoyl phosphate. Arginine 181 and arginine 236 together coordinate L-aspartate. The carbamoyl phosphate site is built by glycine 277 and proline 278.

It belongs to the aspartate/ornithine carbamoyltransferase superfamily. ATCase family. In terms of assembly, heterododecamer (2C3:3R2) of six catalytic PyrB chains organized as two trimers (C3), and six regulatory PyrI chains organized as three dimers (R2).

The enzyme catalyses carbamoyl phosphate + L-aspartate = N-carbamoyl-L-aspartate + phosphate + H(+). It functions in the pathway pyrimidine metabolism; UMP biosynthesis via de novo pathway; (S)-dihydroorotate from bicarbonate: step 2/3. Catalyzes the condensation of carbamoyl phosphate and aspartate to form carbamoyl aspartate and inorganic phosphate, the committed step in the de novo pyrimidine nucleotide biosynthesis pathway. The polypeptide is Aspartate carbamoyltransferase catalytic subunit (Acidovorax ebreus (strain TPSY) (Diaphorobacter sp. (strain TPSY))).